The following is a 215-amino-acid chain: Ras-related protein Rab-5A (215 aa).

10 residues coordinate GTP: S29, A30, G32, K33, S34, S35, H46, E47, T52, and G78. S34 contributes to the Mg(2+) binding site. 2 short sequence motifs (switch) span residues 44–56 (QFHE…IGAA) and 77–93 (AGQE…YRGA). T52 is a binding site for Mg(2+). The residue at position 84 (S84) is a Phosphoserine. Residues N133, K134, D136, A164, and K165 each contribute to the GTP site. Positions 181 to 215 (LPKNEPQNPGANSARGRGVDLTEPAQPARSQCCSN) are disordered. 2 S-geranylgeranyl cysteine lipidation sites follow: C212 and C213.

It belongs to the small GTPase superfamily. Rab family. As to quaternary structure, interacts with GDI1; this promotes dissociation from membranes; phosphorylation at Ser-84 disrupts this interaction. Interacts with GDI2; phosphorylation at Ser-84 disrupts the interaction. Interacts with EEA1. Interacts with RIN1 and GAPVD1, which regulate its pathway, probably by acting as a GEF. Interacts with ALS2CL, SUN2, ZFYVE20 and RUFY1. Interacts with RABEP1; one RABEP1 homodimer binds two RAB5A chains, but at opposite sides of the dimer. Interacts with SGSM1, SGSM3 and PIK3CB. Interacts with RINL. May be a component of a complex composed of RAB5A, DYN2 and PIK3C3. Does not interact with the BLOC-3 complex (heterodimer of HPS1 and HPS4). Interacts with CLN5. Interacts with APPL2. Interacts with F8A1/F8A2/F8A3. Found in a complex with F8A1/F8A2/F8A3, HTT and RAB5A; mediates the recruitment of HTT by RAB5A onto early endosomes. Interacts with ATP9A. Interacts with PPP1R21; mediates the recruitment of FERRY complex by RAB5A onto early endosomes. Mg(2+) serves as cofactor. In terms of processing, phosphorylation of Ser-84 in the switch II region by LRRK2 prevents the association of RAB regulatory proteins, including RAB GDP dissociation inhibitors GDI1 and GDI2.

It is found in the cell membrane. The protein resides in the early endosome membrane. The protein localises to the melanosome. Its subcellular location is the cytoplasmic vesicle. It localises to the cell projection. It is found in the ruffle. The protein resides in the membrane. The protein localises to the cytoplasm. Its subcellular location is the cytosol. It localises to the phagosome membrane. It is found in the endosome membrane. It catalyses the reaction GTP + H2O = GDP + phosphate + H(+). With respect to regulation, regulated by guanine nucleotide exchange factors (GEFs) including RINL, which promote the exchange of bound GDP for free GTP. Regulated by GTPase activating proteins (GAPs) which increase the GTP hydrolysis activity. Inhibited by GDP dissociation inhibitors (GDIs). In terms of biological role, the small GTPases Rab are key regulators of intracellular membrane trafficking, from the formation of transport vesicles to their fusion with membranes. Rabs cycle between an inactive GDP-bound form and an active GTP-bound form that is able to recruit to membranes different sets of downstream effectors directly responsible for vesicle formation, movement, tethering and fusion. RAB5A is required for the fusion of plasma membranes and early endosomes. Contributes to the regulation of filopodia extension. Required for the exosomal release of SDCBP, CD63, PDCD6IP and syndecan. Regulates maturation of apoptotic cell-containing phagosomes, probably downstream of DYN2 and PIK3C3. The polypeptide is Ras-related protein Rab-5A (Rattus norvegicus (Rat)).